A 996-amino-acid chain; its full sequence is Disease resistance protein RGA4 (996 aa).

The tract at residues 1-176 (MEAALLSGFI…PRIHEADLVG (176 aa)) is structured coiled coil (CC) domain. Residues 111–138 (NLQLAQQLQRLKRMAAEANQRKQRYTAA) are a coiled coil. In terms of domain architecture, NB-ARC spans 180–462 (DREELLEQLA…RWLAEGFVEP (283 aa)). LRR repeat units lie at residues 481–503 (RNII…TYGM), 504–528 (MREF…KFVP), 529–549 (KYVR…NFNG), 577–599 (LRVL…ICNL), 600–621 (VLLK…IAKL), 622–644 (KDLE…VFGL), 698–722 (MNKL…DLRE), 759–781 (PCYL…VTSL), 782–804 (RGLK…ALSN), 805–830 (LSYL…GFPR), and 851–874 (LPFL…QIEC).

It belongs to the disease resistance NB-LRR family. Forms homodimer or heterodimer with RGA5 through its coiled coil (CC) domain. Expressed in leaves.

Its subcellular location is the cytoplasm. Its function is as follows. Disease resistance (R) protein. Resistance proteins guard the plant against pathogens that contain an appropriate avirulence protein via an indirect interaction with this avirulence protein. That triggers a defense system including the hypersensitive response, which restricts the pathogen growth. Contribution of RGA5 is required to recognize the effector avirulence proteins AVR-Pia and AVR1-CO39 from M.oryzae. Acts as a constitutively active cell death inducer that is repressed by RGA5. Immune response triggered by the RGA4-RGA5 -mediated recognition of AVR1-CO39 confers resistance to X.oryzae pathovars. This Oryza sativa subsp. japonica (Rice) protein is Disease resistance protein RGA4.